Consider the following 557-residue polypeptide: Formate--tetrahydrofolate ligase (557 aa).

Threonine 66–serine 73 lines the ATP pocket.

The protein belongs to the formate--tetrahydrofolate ligase family.

It carries out the reaction (6S)-5,6,7,8-tetrahydrofolate + formate + ATP = (6R)-10-formyltetrahydrofolate + ADP + phosphate. The protein operates within one-carbon metabolism; tetrahydrofolate interconversion. The protein is Formate--tetrahydrofolate ligase of Clostridium botulinum (strain 657 / Type Ba4).